The primary structure comprises 178 residues: Large ribosomal subunit protein uL6 (178 aa).

This sequence belongs to the universal ribosomal protein uL6 family. As to quaternary structure, part of the 50S ribosomal subunit.

Its function is as follows. This protein binds to the 23S rRNA, and is important in its secondary structure. It is located near the subunit interface in the base of the L7/L12 stalk, and near the tRNA binding site of the peptidyltransferase center. The polypeptide is Large ribosomal subunit protein uL6 (Campylobacter hominis (strain ATCC BAA-381 / DSM 21671 / CCUG 45161 / LMG 19568 / NCTC 13146 / CH001A)).